A 260-amino-acid chain; its full sequence is Proteasome subunit alpha (260 aa).

It belongs to the peptidase T1A family. In terms of assembly, the 20S proteasome core is composed of 14 alpha and 14 beta subunits that assemble into four stacked heptameric rings, resulting in a barrel-shaped structure. The two inner rings, each composed of seven catalytic beta subunits, are sandwiched by two outer rings, each composed of seven alpha subunits. The catalytic chamber with the active sites is on the inside of the barrel. Has a gated structure, the ends of the cylinder being occluded by the N-termini of the alpha-subunits. Is capped at one or both ends by the proteasome regulatory ATPase, PAN.

It localises to the cytoplasm. Its activity is regulated as follows. The formation of the proteasomal ATPase PAN-20S proteasome complex, via the docking of the C-termini of PAN into the intersubunit pockets in the alpha-rings, triggers opening of the gate for substrate entry. Interconversion between the open-gate and close-gate conformations leads to a dynamic regulation of the 20S proteasome proteolysis activity. Its function is as follows. Component of the proteasome core, a large protease complex with broad specificity involved in protein degradation. The polypeptide is Proteasome subunit alpha (Thermococcus kodakarensis (strain ATCC BAA-918 / JCM 12380 / KOD1) (Pyrococcus kodakaraensis (strain KOD1))).